The sequence spans 242 residues: Immunity protein TsiV2 (242 aa).

The next 3 membrane-spanning stretches (helical) occupy residues 39-59 (VFGAISAGIVPLWPFIFFADI), 66-86 (FWGFICFSLAGMAAARYLFMP), and 118-138 (FAWVGIAVCLLALAVVGPLAF).

Its subcellular location is the host membrane. In terms of biological role, immunity protein that plays a role in preventing early activation of toxin VasX. This chain is Immunity protein TsiV2, found in Vibrio cholerae serotype O1 (strain ATCC 39315 / El Tor Inaba N16961).